The chain runs to 244 residues: HTH-type transcriptional regulator RdgA (244 aa).

One can recognise an HTH cro/C1-type domain in the interval 9-62; that stretch reads LKTARTAQGLSQKALGDMIGVSQAAIQKIEVGKASQTTKIVELSNNLRVRPEWL. A DNA-binding region (H-T-H motif) is located at residues 20-39; sequence QKALGDMIGVSQAAIQKIEV.

Its function is as follows. Regulates pectin lyase production in response to DNA damage. The polypeptide is HTH-type transcriptional regulator RdgA (rdgA) (Pectobacterium carotovorum subsp. carotovorum (Erwinia carotovora subsp. carotovora)).